Here is a 364-residue protein sequence, read N- to C-terminus: Chorismate synthase (364 aa).

Positions 48 and 54 each coordinate NADP(+). FMN is bound by residues 125-127, 238-239, Gly-278, 293-297, and Arg-319; these read RSS, NA, and KPTSS.

It belongs to the chorismate synthase family. Homotetramer. It depends on FMNH2 as a cofactor.

The catalysed reaction is 5-O-(1-carboxyvinyl)-3-phosphoshikimate = chorismate + phosphate. Its pathway is metabolic intermediate biosynthesis; chorismate biosynthesis; chorismate from D-erythrose 4-phosphate and phosphoenolpyruvate: step 7/7. In terms of biological role, catalyzes the anti-1,4-elimination of the C-3 phosphate and the C-6 proR hydrogen from 5-enolpyruvylshikimate-3-phosphate (EPSP) to yield chorismate, which is the branch point compound that serves as the starting substrate for the three terminal pathways of aromatic amino acid biosynthesis. This reaction introduces a second double bond into the aromatic ring system. This is Chorismate synthase from Marinobacter nauticus (strain ATCC 700491 / DSM 11845 / VT8) (Marinobacter aquaeolei).